An 889-amino-acid polypeptide reads, in one-letter code: Translation initiation factor IF-2 (889 aa).

The disordered stretch occupies residues 158 to 296 (LKEKQEKRRQ…KYKSDELQSQ (139 aa)). Over residues 209 to 228 (AAATPATSTAPATTSTTAAT) the composition is skewed to low complexity. The span at 238–270 (VKPEEKGEKKKKPTKQDAWKDEPVKRREPKARG) shows a compositional bias: basic and acidic residues. A tr-type G domain is found at 391–560 (PRAPVVTVMG…LLQAEVLELK (170 aa)). A G1 region spans residues 400–407 (GHVDHGKT). 400–407 (GHVDHGKT) lines the GTP pocket. Positions 425 to 429 (GITQH) are G2. Residues 446-449 (DTPG) are G3. GTP is bound by residues 446-450 (DTPGH) and 500-503 (NKMD). The tract at residues 500 to 503 (NKMD) is G4. The segment at 536-538 (SAK) is G5.

This sequence belongs to the TRAFAC class translation factor GTPase superfamily. Classic translation factor GTPase family. IF-2 subfamily.

The protein resides in the cytoplasm. Its function is as follows. One of the essential components for the initiation of protein synthesis. Protects formylmethionyl-tRNA from spontaneous hydrolysis and promotes its binding to the 30S ribosomal subunits. Also involved in the hydrolysis of GTP during the formation of the 70S ribosomal complex. In Nitrosomonas europaea (strain ATCC 19718 / CIP 103999 / KCTC 2705 / NBRC 14298), this protein is Translation initiation factor IF-2.